The sequence spans 212 residues: Urease accessory protein UreG 2 (212 aa).

Gly-11–Thr-18 serves as a coordination point for GTP.

It belongs to the SIMIBI class G3E GTPase family. UreG subfamily. As to quaternary structure, homodimer. UreD, UreF and UreG form a complex that acts as a GTP-hydrolysis-dependent molecular chaperone, activating the urease apoprotein by helping to assemble the nickel containing metallocenter of UreC. The UreE protein probably delivers the nickel.

It is found in the cytoplasm. Facilitates the functional incorporation of the urease nickel metallocenter. This process requires GTP hydrolysis, probably effectuated by UreG. The polypeptide is Urease accessory protein UreG 2 (Brucella abortus (strain 2308)).